Consider the following 480-residue polypeptide: tRNA-2-methylthio-N(6)-dimethylallyladenosine synthase (480 aa).

Residues 3 to 120 (KKLYIKTWGC…LPEMLNQLQH (118 aa)) enclose the MTTase N-terminal domain. 6 residues coordinate [4Fe-4S] cluster: Cys-12, Cys-49, Cys-83, Cys-157, Cys-161, and Cys-164. A Radical SAM core domain is found at 143–375 (KADGASAFVS…QEQITHQALR (233 aa)). In terms of domain architecture, TRAM spans 378–441 (RQMLNTEQRV…ANSLRGELVR (64 aa)).

It belongs to the methylthiotransferase family. MiaB subfamily. As to quaternary structure, monomer. [4Fe-4S] cluster serves as cofactor.

The protein resides in the cytoplasm. It carries out the reaction N(6)-dimethylallyladenosine(37) in tRNA + (sulfur carrier)-SH + AH2 + 2 S-adenosyl-L-methionine = 2-methylsulfanyl-N(6)-dimethylallyladenosine(37) in tRNA + (sulfur carrier)-H + 5'-deoxyadenosine + L-methionine + A + S-adenosyl-L-homocysteine + 2 H(+). Its function is as follows. Catalyzes the methylthiolation of N6-(dimethylallyl)adenosine (i(6)A), leading to the formation of 2-methylthio-N6-(dimethylallyl)adenosine (ms(2)i(6)A) at position 37 in tRNAs that read codons beginning with uridine. This chain is tRNA-2-methylthio-N(6)-dimethylallyladenosine synthase, found in Colwellia psychrerythraea (strain 34H / ATCC BAA-681) (Vibrio psychroerythus).